A 161-amino-acid polypeptide reads, in one-letter code: Carboxysome assembly protein CcmN (161 aa).

The segment at 111–140 (LLSAETPPTTATVSSSEPAGRSPQSSAIAH) is disordered. Residues 116 to 137 (TPPTTATVSSSEPAGRSPQSSA) are compositionally biased toward polar residues. The Encapsulation peptide motif lies at 144–161 (VYGKEQFLRMRQSMFPDR).

The protein belongs to the CcmN family. Interacts with CcmM via the N-terminus of CcmN. Interacts with CcmK2 via the 18 C-terminal residues.

It is found in the carboxysome. Required for carboxysome formation; the N-terminus interacts with CcmM which itself binds RuBisCO (ribulose bisphosphate carboxylase, rbcL-rbcS), while the C-terminal 18 residues interact with carboxysome shell protein CcmK2. Required for growth in normal air. In terms of biological role, beta-carboxysome assembly initiates when soluble RuBisCO is condensed into a liquid matrix in a pre-carboxysome by the RbcS-like domains of probably both CcmM58 and CcmM35. CcmN interacts with the N-terminus of CcmM58, and then recruits the CcmK2 major shell protein via CcmN's encapsulation peptide. Shell formation requires CcmK proteins and CcmO. CcmL caps the otherwise elongated carboxysome. Once fully encapsulated carboxysomes are formed, they migrate within the cell probably via interactions with the cytoskeleton. In Synechococcus elongatus (strain ATCC 33912 / PCC 7942 / FACHB-805) (Anacystis nidulans R2), this protein is Carboxysome assembly protein CcmN.